Reading from the N-terminus, the 213-residue chain is Cell division protein SepF 2 (213 aa).

Residues 16 to 89 (EDDGYDGRGF…ASLAAESSRP (74 aa)) form a disordered region. Over residues 27–39 (PDDDFEPELDPEP) the composition is skewed to acidic residues.

This sequence belongs to the SepF family. In terms of assembly, homodimer. Interacts with FtsZ.

It is found in the cytoplasm. Functionally, cell division protein that is part of the divisome complex and is recruited early to the Z-ring. Probably stimulates Z-ring formation, perhaps through the cross-linking of FtsZ protofilaments. Its function overlaps with FtsA. This chain is Cell division protein SepF 2, found in Streptomyces coelicolor (strain ATCC BAA-471 / A3(2) / M145).